A 64-amino-acid polypeptide reads, in one-letter code: Conotoxin Pu3.4 (64 aa).

The signal sequence occupies residues 1–16 (LGVLLPICLLLFPLTA). A propeptide spanning residues 17 to 49 (LPLDGDQPADRPAERMQDDFITEQHPLFDPVKR) is cleaved from the precursor. Cystine bridges form between C50–C63, C51–C59, and C55–C62. 4-hydroxyproline is present on P61.

The protein belongs to the conotoxin M superfamily. As to expression, expressed by the venom duct.

It localises to the secreted. This Conus pulicarius (Flea-bitten cone) protein is Conotoxin Pu3.4.